The sequence spans 645 residues: COP9 signalosome complex subunit 10 (645 aa).

The segment covering 1 to 45 (MSDEDNNYDDFMLSDDEGMESIEMEEETDDEDKQNIEINEDNSQD) has biased composition (acidic residues). The interval 1-63 (MSDEDNNYDD…HKQHEQGTFE (63 aa)) is disordered. The segment covering 46–63 (DQDRGAARHKQHEQGTFE) has biased composition (basic and acidic residues). Residues 348–543 (DLSFALMRYY…DLVYFGDENK (196 aa)) form the PCI domain.

In terms of assembly, component of a COP9 signalosome-like (CSN) complex, composed of at least RRI1/CSN5, CSN9, RRI2/CSN10, PCI8/CSN11, CSN12 and CSI1. In the complex, it probably interacts directly with CSN12.

It localises to the cytoplasm. The protein resides in the nucleus. Functionally, component of the COP9 signalosome (CSN) complex that acts as an regulator of the ubiquitin (Ubl) conjugation pathway by mediating the deneddylation of the cullin subunit of SCF-type E3 ubiquitin-protein ligase complexes. The CSN complex is involved in the regulation of the mating pheromone response. The sequence is that of COP9 signalosome complex subunit 10 (RRI2) from Saccharomyces cerevisiae (strain ATCC 204508 / S288c) (Baker's yeast).